Reading from the N-terminus, the 205-residue chain is Small heat shock protein hspG12 (205 aa).

Residues 35–205 (KTIIDILPPM…YSNTIKININ (171 aa)) form the sHSP domain. The disordered stretch occupies residues 99–147 (PSLLDTKEDEASIEEFDEDDIKPKSTETTSTLSNSKENKKDENKSKSTE). The span at 109 to 118 (ASIEEFDEDD) shows a compositional bias: acidic residues. The segment covering 134–147 (KENKKDENKSKSTE) has biased composition (basic and acidic residues).

This sequence belongs to the small heat shock protein (HSP20) family.

The sequence is that of Small heat shock protein hspG12 (hspG12) from Dictyostelium discoideum (Social amoeba).